The primary structure comprises 245 residues: 1-(5-phosphoribosyl)-5-[(5-phosphoribosylamino)methylideneamino] imidazole-4-carboxamide isomerase (245 aa).

Aspartate 7 acts as the Proton acceptor in catalysis. Catalysis depends on aspartate 129, which acts as the Proton donor.

This sequence belongs to the HisA/HisF family.

The protein localises to the cytoplasm. The enzyme catalyses 1-(5-phospho-beta-D-ribosyl)-5-[(5-phospho-beta-D-ribosylamino)methylideneamino]imidazole-4-carboxamide = 5-[(5-phospho-1-deoxy-D-ribulos-1-ylimino)methylamino]-1-(5-phospho-beta-D-ribosyl)imidazole-4-carboxamide. It participates in amino-acid biosynthesis; L-histidine biosynthesis; L-histidine from 5-phospho-alpha-D-ribose 1-diphosphate: step 4/9. In Salmonella agona (strain SL483), this protein is 1-(5-phosphoribosyl)-5-[(5-phosphoribosylamino)methylideneamino] imidazole-4-carboxamide isomerase.